The chain runs to 314 residues: Ecto-ADP-ribosyltransferase 4 (314 aa).

Positions 1-46 (MGPLINRCKKILLPTTVPPATMRIWLLGGPLPFLLLLSGLQRPTEG) are cleaved as a signal peptide. 2 cysteine pairs are disulfide-bonded: Cys-69–Cys-280 and Cys-182–Cys-231. Positions 91–276 (KNYFRMWQKA…LQLRSTGNLS (186 aa)) constitute a TR mART core domain. Asn-114 carries N-linked (GlcNAc...) asparagine glycosylation. Tyr-126 lines the NAD(+) pocket. Asn-178 carries N-linked (GlcNAc...) asparagine glycosylation. An NAD(+)-binding site is contributed by Gln-206. An N-linked (GlcNAc...) asparagine glycan is attached at Asn-222. Ser-240 is a binding site for NAD(+). Asn-257 and Asn-274 each carry an N-linked (GlcNAc...) asparagine glycan. Ala-285 carries the GPI-anchor amidated alanine lipid modification. A propeptide spans 286 to 314 (SSKKCIPDPIAIASLSFLTSVIIFSKSRV) (removed in mature form).

It belongs to the Arg-specific ADP-ribosyltransferase family.

It is found in the cell membrane. It catalyses the reaction L-arginyl-[protein] + NAD(+) = N(omega)-(ADP-D-ribosyl)-L-arginyl-[protein] + nicotinamide + H(+). In Pan troglodytes (Chimpanzee), this protein is Ecto-ADP-ribosyltransferase 4 (ART4).